The following is a 245-amino-acid chain: 1-(5-phosphoribosyl)-5-[(5-phosphoribosylamino)methylideneamino] imidazole-4-carboxamide isomerase (245 aa).

Residue Asp-7 is the Proton acceptor of the active site. The Proton donor role is filled by Asp-129.

This sequence belongs to the HisA/HisF family.

The protein localises to the cytoplasm. The catalysed reaction is 1-(5-phospho-beta-D-ribosyl)-5-[(5-phospho-beta-D-ribosylamino)methylideneamino]imidazole-4-carboxamide = 5-[(5-phospho-1-deoxy-D-ribulos-1-ylimino)methylamino]-1-(5-phospho-beta-D-ribosyl)imidazole-4-carboxamide. It functions in the pathway amino-acid biosynthesis; L-histidine biosynthesis; L-histidine from 5-phospho-alpha-D-ribose 1-diphosphate: step 4/9. This is 1-(5-phosphoribosyl)-5-[(5-phosphoribosylamino)methylideneamino] imidazole-4-carboxamide isomerase from Psychromonas ingrahamii (strain DSM 17664 / CCUG 51855 / 37).